Here is a 420-residue protein sequence, read N- to C-terminus: UDP-N-acetylglucosamine 1-carboxyvinyltransferase (420 aa).

22-23 (KN) is a phosphoenolpyruvate binding site. Position 95 (arginine 95) interacts with UDP-N-acetyl-alpha-D-glucosamine. Cysteine 119 acts as the Proton donor in catalysis. 2-(S-cysteinyl)pyruvic acid O-phosphothioketal is present on cysteine 119. UDP-N-acetyl-alpha-D-glucosamine-binding positions include 124 to 128 (RPIDQ), aspartate 307, and isoleucine 329.

The protein belongs to the EPSP synthase family. MurA subfamily.

The protein resides in the cytoplasm. The enzyme catalyses phosphoenolpyruvate + UDP-N-acetyl-alpha-D-glucosamine = UDP-N-acetyl-3-O-(1-carboxyvinyl)-alpha-D-glucosamine + phosphate. The protein operates within cell wall biogenesis; peptidoglycan biosynthesis. Cell wall formation. Adds enolpyruvyl to UDP-N-acetylglucosamine. The sequence is that of UDP-N-acetylglucosamine 1-carboxyvinyltransferase from Myxococcus xanthus (strain DK1622).